The primary structure comprises 550 residues: Tyrosine-protein phosphatase 1 (550 aa).

The Tyrosine-protein phosphatase domain occupies 260-539 (LYQKFLRLQS…KYVYDLIDSL (280 aa)). Residues Ser318 and Ser320 each carry the phosphoserine modification. The active-site Phosphocysteine intermediate is Cys470.

The protein belongs to the protein-tyrosine phosphatase family. Non-receptor class subfamily.

It localises to the cytoplasm. It carries out the reaction O-phospho-L-tyrosyl-[protein] + H2O = L-tyrosyl-[protein] + phosphate. In terms of biological role, plays a role in inhibiting the onset of mitosis. Dephosphorylates sty1/spc1 and wis1/spc2/sty2. This is Tyrosine-protein phosphatase 1 (pyp1) from Schizosaccharomyces pombe (strain 972 / ATCC 24843) (Fission yeast).